Here is a 407-residue protein sequence, read N- to C-terminus: Serine/threonine-protein kinase GRIK2 (407 aa).

A disordered region spans residues 21-64; sequence SGSRNQQSPKPYDDDTHSCDSDVTSTARGEEEEDEEEVEQKSRS. Basic and acidic residues predominate over residues 31-40; it reads PYDDDTHSCD. A Protein kinase domain is found at 107–370; the sequence is YVRVCKIGSG…LKNVSEHPWV (264 aa). Residues 113-121 and Lys-136 contribute to the ATP site; that span reads IGSGSYGKV. Thr-153 carries the phosphothreonine; by autocatalysis modification. The active-site Proton acceptor is Asp-238. Phosphoserine; by KIN10 is present on Ser-260.

The protein belongs to the protein kinase superfamily. Ser/Thr protein kinase family. In terms of assembly, associates with the SNF1-related protein kinase (SnRK) complex. Interacts with AL1, a geminivirus (TGMV) protein essential for viral replication. In terms of tissue distribution, expressed in shoot apical meristem, leaf primordium and emerging petiole (at protein level).

The catalysed reaction is L-seryl-[protein] + ATP = O-phospho-L-seryl-[protein] + ADP + H(+). It catalyses the reaction L-threonyl-[protein] + ATP = O-phospho-L-threonyl-[protein] + ADP + H(+). Its activity is regulated as follows. Activated when autophosphorylated at Thr-153 and inactivated when phosphorylated at Ser-260 by SnRK1.1/KIN10. Activates SnRK1.1/KIN10 and SnRK1.2/KIN11 by phosphorylation of their activation-loop 'Thr-198' and 'Thr-176', respectively. Required for the regulation by SnRK1 kinases of the transcription of a large set of genes, the modification the activity of metabolic enzymes, and the control of various nutrient-responsive cellular developmental processes. This Arabidopsis thaliana (Mouse-ear cress) protein is Serine/threonine-protein kinase GRIK2 (GRIK2).